A 954-amino-acid chain; its full sequence is Chromosomal passenger complex protein BIR1 (954 aa).

BIR repeat units follow at residues arginine 20–tyrosine 117 and arginine 153–glutamine 241. 4 residues coordinate Zn(2+): cysteine 208, cysteine 211, histidine 228, and cysteine 237. The tract at residues asparagine 375–lysine 419 is disordered. Residues isoleucine 385–proline 396 show a composition bias toward basic residues. 3 positions are modified to phosphoserine: serine 477, serine 508, and serine 552. Disordered stretches follow at residues aspartate 541–valine 645 and phenylalanine 661–proline 685. Positions proline 556–threonine 583 are enriched in basic and acidic residues. Serine 587 is subject to Phosphoserine. A compositionally biased stretch (polar residues) spans serine 593 to threonine 604. Residues serine 751 and serine 765 each carry the phosphoserine modification. The disordered stretch occupies residues leucine 798 to lysine 839. The span at serine 809 to threonine 818 shows a compositional bias: basic and acidic residues. A compositionally biased stretch (polar residues) spans serine 819–glycine 835.

In terms of assembly, component of the CPC complex at least composed of IPL1, BIR1 and SLI15. Interacts with CBF2/NDC10. Interacts with CBF3D/SKP1.

In terms of biological role, component of the chromosomal passenger complex (CPC), a complex that acts as a key regulator of chromosome segregation and cytokinesis. This chain is Chromosomal passenger complex protein BIR1 (BIR1), found in Saccharomyces cerevisiae (strain ATCC 204508 / S288c) (Baker's yeast).